Consider the following 152-residue polypeptide: Regulatory protein RecX (152 aa).

The protein belongs to the RecX family.

Its subcellular location is the cytoplasm. In terms of biological role, modulates RecA activity. The protein is Regulatory protein RecX of Haemophilus influenzae (strain PittEE).